The primary structure comprises 593 residues: Aspartate--tRNA ligase (593 aa).

E180 provides a ligand contact to L-aspartate. The segment at Q204 to K207 is aspartate. R226 lines the L-aspartate pocket. Residues R226–E228 and Q235 each bind ATP. H453 is an L-aspartate binding site. An ATP-binding site is contributed by E487. Position 494 (R494) interacts with L-aspartate. Residue G539–R542 coordinates ATP.

It belongs to the class-II aminoacyl-tRNA synthetase family. Type 1 subfamily. Homodimer.

The protein resides in the cytoplasm. The catalysed reaction is tRNA(Asp) + L-aspartate + ATP = L-aspartyl-tRNA(Asp) + AMP + diphosphate. Catalyzes the attachment of L-aspartate to tRNA(Asp) in a two-step reaction: L-aspartate is first activated by ATP to form Asp-AMP and then transferred to the acceptor end of tRNA(Asp). This chain is Aspartate--tRNA ligase, found in Clostridium botulinum (strain Loch Maree / Type A3).